The primary structure comprises 671 residues: DNA ligase (671 aa).

NAD(+)-binding positions include 34–38 (DSEYD), 83–84 (SL), and glutamate 113. Lysine 115 functions as the N6-AMP-lysine intermediate in the catalytic mechanism. 4 residues coordinate NAD(+): arginine 136, glutamate 170, lysine 286, and lysine 310. Residues cysteine 404, cysteine 407, cysteine 422, and cysteine 427 each coordinate Zn(2+). The BRCT domain maps to 590-671 (EEAGVFAGKT…FTQAVEQSEQ (82 aa)).

This sequence belongs to the NAD-dependent DNA ligase family. LigA subfamily. Mg(2+) is required as a cofactor. The cofactor is Mn(2+).

It catalyses the reaction NAD(+) + (deoxyribonucleotide)n-3'-hydroxyl + 5'-phospho-(deoxyribonucleotide)m = (deoxyribonucleotide)n+m + AMP + beta-nicotinamide D-nucleotide.. In terms of biological role, DNA ligase that catalyzes the formation of phosphodiester linkages between 5'-phosphoryl and 3'-hydroxyl groups in double-stranded DNA using NAD as a coenzyme and as the energy source for the reaction. It is essential for DNA replication and repair of damaged DNA. The polypeptide is DNA ligase (Shouchella clausii (strain KSM-K16) (Alkalihalobacillus clausii)).